Here is a 353-residue protein sequence, read N- to C-terminus: Protein-glutamate methylesterase/protein-glutamine glutaminase 4 (353 aa).

The Response regulatory domain maps to 7-124; that stretch reads RILVAEDSPT…SPDFDADSRR (118 aa). 4-aspartylphosphate is present on Asp58. The region spanning 158-350 is the CheB-type methylesterase domain; that stretch reads PVSPTRPGVV…SRLTSAFRGS (193 aa). Active-site residues include Ser172, His199, and Asp292.

Belongs to the CheB family. Post-translationally, phosphorylated by CheA. Phosphorylation of the N-terminal regulatory domain activates the methylesterase activity.

The protein localises to the cytoplasm. It catalyses the reaction [protein]-L-glutamate 5-O-methyl ester + H2O = L-glutamyl-[protein] + methanol + H(+). It carries out the reaction L-glutaminyl-[protein] + H2O = L-glutamyl-[protein] + NH4(+). Involved in chemotaxis. Part of a chemotaxis signal transduction system that modulates chemotaxis in response to various stimuli. Catalyzes the demethylation of specific methylglutamate residues introduced into the chemoreceptors (methyl-accepting chemotaxis proteins or MCP) by CheR. Also mediates the irreversible deamidation of specific glutamine residues to glutamic acid. This chain is Protein-glutamate methylesterase/protein-glutamine glutaminase 4, found in Myxococcus xanthus (strain DK1622).